The sequence spans 432 residues: Mannan endo-1,4-beta-mannosidase 1 (432 aa).

Residues 1–28 form the signal peptide; the sequence is MRLLGAHRAALLVLACVVVVVIHGLGEA. Tryptophan 93 and asparagine 209 together coordinate substrate. The active-site Proton donor is glutamate 210. Tyrosine 289 contacts substrate. The active-site Nucleophile is glutamate 329. Tryptophan 371 contributes to the substrate binding site.

This sequence belongs to the glycosyl hydrolase 5 (cellulase A) family. In terms of tissue distribution, ubiquitous.

Its subcellular location is the secreted. The catalysed reaction is Random hydrolysis of (1-&gt;4)-beta-D-mannosidic linkages in mannans, galactomannans and glucomannans.. The sequence is that of Mannan endo-1,4-beta-mannosidase 1 (MAN1) from Oryza sativa subsp. japonica (Rice).